Reading from the N-terminus, the 245-residue chain is Adenosylcobinamide-GDP ribazoletransferase (245 aa).

A run of 5 helical transmembrane segments spans residues 31 to 51 (FGRA…VLYA), 61 to 81 (PLLQ…ALHL), 113 to 133 (VAVV…AALL), 138 to 158 (AGLL…LFLT), and 192 to 212 (LAFG…FAWL).

The protein belongs to the CobS family. Mg(2+) serves as cofactor.

It is found in the cell inner membrane. The catalysed reaction is alpha-ribazole + adenosylcob(III)inamide-GDP = adenosylcob(III)alamin + GMP + H(+). The enzyme catalyses alpha-ribazole 5'-phosphate + adenosylcob(III)inamide-GDP = adenosylcob(III)alamin 5'-phosphate + GMP + H(+). It functions in the pathway cofactor biosynthesis; adenosylcobalamin biosynthesis; adenosylcobalamin from cob(II)yrinate a,c-diamide: step 7/7. Functionally, joins adenosylcobinamide-GDP and alpha-ribazole to generate adenosylcobalamin (Ado-cobalamin). Also synthesizes adenosylcobalamin 5'-phosphate from adenosylcobinamide-GDP and alpha-ribazole 5'-phosphate. This chain is Adenosylcobinamide-GDP ribazoletransferase, found in Pseudomonas aeruginosa (strain UCBPP-PA14).